The sequence spans 82 residues: Myosin light chain alkali (82 aa).

An EF-hand domain is found at 7–42 (GCYEDFIECLKLYDKEENGTMMLAELQHALLALGES).

In terms of assembly, myosin is a hexamer of 2 heavy chains and 4 light chains.

The sequence is that of Myosin light chain alkali (Mlc1) from Drosophila mauritiana (Fruit fly).